The sequence spans 160 residues: Photosystem I reaction center subunit XI (160 aa).

The next 2 membrane-spanning stretches (helical) occupy residues leucine 84–valine 104 and phenylalanine 125–glutamate 145.

The protein belongs to the PsaL family.

Its subcellular location is the cellular thylakoid membrane. The protein is Photosystem I reaction center subunit XI of Microcystis aeruginosa (strain NIES-843 / IAM M-2473).